Here is a 250-residue protein sequence, read N- to C-terminus: tRNA (guanine-N(1)-)-methyltransferase (250 aa).

S-adenosyl-L-methionine is bound by residues Gly116 and 136 to 141; that span reads IGDYVL.

This sequence belongs to the RNA methyltransferase TrmD family. In terms of assembly, homodimer.

It is found in the cytoplasm. The catalysed reaction is guanosine(37) in tRNA + S-adenosyl-L-methionine = N(1)-methylguanosine(37) in tRNA + S-adenosyl-L-homocysteine + H(+). Specifically methylates guanosine-37 in various tRNAs. This is tRNA (guanine-N(1)-)-methyltransferase from Pseudomonas putida (strain GB-1).